A 230-amino-acid polypeptide reads, in one-letter code: Orotidine 5'-phosphate decarboxylase (230 aa).

Residues Asp10, Lys31, 58 to 67 (DLKLHDIPNT), Thr117, Arg179, Gln188, Gly208, and Arg209 contribute to the substrate site. The active-site Proton donor is Lys60.

The protein belongs to the OMP decarboxylase family. Type 1 subfamily. Homodimer.

The enzyme catalyses orotidine 5'-phosphate + H(+) = UMP + CO2. It functions in the pathway pyrimidine metabolism; UMP biosynthesis via de novo pathway; UMP from orotate: step 2/2. In terms of biological role, catalyzes the decarboxylation of orotidine 5'-monophosphate (OMP) to uridine 5'-monophosphate (UMP). The sequence is that of Orotidine 5'-phosphate decarboxylase from Staphylococcus haemolyticus (strain JCSC1435).